Reading from the N-terminus, the 226-residue chain is Glutathione peroxidase 3 (226 aa).

An N-terminal signal peptide occupies residues 1-24 (MARILRASCLLSLLLAGFVPPGRG). Sec73 is a catalytic residue. Residue Sec73 is a non-standard amino acid, selenocysteine.

It belongs to the glutathione peroxidase family. In terms of assembly, homotetramer. In terms of tissue distribution, secreted in plasma.

The protein localises to the secreted. It carries out the reaction 2 glutathione + H2O2 = glutathione disulfide + 2 H2O. The catalysed reaction is tert-butyl hydroperoxide + 2 glutathione = tert-butanol + glutathione disulfide + H2O. Protects cells and enzymes from oxidative damage, by catalyzing the reduction of hydrogen peroxide, lipid peroxides and organic hydroperoxide, by glutathione. This Rattus norvegicus (Rat) protein is Glutathione peroxidase 3.